The chain runs to 406 residues: COP9 signalosome complex subunit 4 (406 aa).

A2 bears the N-acetylalanine mark. K25 carries the post-translational modification N6-acetyllysine. One can recognise a PCI domain in the interval 197–366 (YRRKFIEAAQ…GIVHFETREA (170 aa)).

The protein belongs to the CSN4 family. Component of the CSN complex, composed of COPS1/GPS1, COPS2, COPS3, COPS4, COPS5, COPS6, COPS7 (COPS7A or COPS7B), COPS8 and COPS9. In the complex, it probably interacts directly with COPS1, COPS2, COPS3, COPS5, COPS6, COPS7 (COPS7A or COPS7B) and COPS8. Interacts with TOR1A; the interaction is direct and associates TOR1A and SNAPIN with the CSN complex. Interacts with STON2; controls STON2 neddylation levels. Interacts with ERCC6.

The protein resides in the cytoplasm. Its subcellular location is the nucleus. It is found in the cytoplasmic vesicle. The protein localises to the secretory vesicle. It localises to the synaptic vesicle. In terms of biological role, component of the COP9 signalosome complex (CSN), a complex involved in various cellular and developmental processes. The CSN complex is an essential regulator of the ubiquitin (Ubl) conjugation pathway by mediating the deneddylation of the cullin subunits of SCF-type E3 ligase complexes, leading to decrease the Ubl ligase activity of SCF-type complexes such as SCF, CSA or DDB2. Also involved in the deneddylation of non-cullin subunits such as STON2. The complex is also involved in phosphorylation of p53/TP53, c-jun/JUN, IkappaBalpha/NFKBIA, ITPK1, IRF8/ICSBP and SNAPIN, possibly via its association with CK2 and PKD kinases. CSN-dependent phosphorylation of TP53 and JUN promotes and protects degradation by the Ubl system, respectively. This chain is COP9 signalosome complex subunit 4 (Cops4), found in Rattus norvegicus (Rat).